Reading from the N-terminus, the 137-residue chain is Large ribosomal subunit protein uL16 (137 aa).

The protein belongs to the universal ribosomal protein uL16 family. As to quaternary structure, part of the 50S ribosomal subunit.

Functionally, binds 23S rRNA and is also seen to make contacts with the A and possibly P site tRNAs. The chain is Large ribosomal subunit protein uL16 from Wolbachia sp. subsp. Brugia malayi (strain TRS).